The following is a 943-amino-acid chain: Glutamate receptor ionotropic, NMDA 1 (943 aa).

Residues 1-20 (MSTMRLLTLALLFSCSFARA) form the signal peptide. Topologically, residues 21–580 (ACDPKIVNIG…TLDSFMQPFQ (560 aa)) are extracellular. 10 N-linked (GlcNAc...) asparagine glycosylation sites follow: N61, N224, N260, N297, N321, N371, N389, N461, N492, and N512. C79 and C329 form a disulfide bridge. 2 disulfides stabilise this stretch: C441/C475 and C457/C476. Glycine is bound by residues P537, T539, and R544. Residues 581-601 (STLWLLVGLSVHVVAVMLYLL) traverse the membrane as a helical segment. Topologically, residues 602–623 (DRFSPFGRFKVNSEEEEEDALT) are cytoplasmic. The segment at residues 624 to 645 (LSSAMWFSWGVLLNSGIGEGAP) is an intramembrane region (discontinuously helical). The pore-forming stretch occupies residues 624–645 (LSSAMWFSWGVLLNSGIGEGAP). The Cytoplasmic portion of the chain corresponds to 646–651 (RSFSAR). The chain crosses the membrane as a helical span at residues 652–668 (ILGMVWAGFAMIIVASY). The Extracellular segment spans residues 669 to 833 (TANLAAFLVL…NAPATLTFEN (165 aa)). N-linked (GlcNAc...) asparagine glycosylation is present at N695. S709 and D753 together coordinate glycine. The cysteines at positions 765 and 819 are disulfide-linked. N792 carries an N-linked (GlcNAc...) asparagine glycan. A helical transmembrane segment spans residues 834–854 (MAGVFMLVAGGIVAGIFLIFI). Residues 855-943 (EIAYKRHKDA…LSDPSVSTVV (89 aa)) lie on the Cytoplasmic side of the membrane. Residues S910, S911, S917, and S918 each carry the phosphoserine modification.

The protein belongs to the glutamate-gated ion channel (TC 1.A.10.1) family. NR1/GRIN1 subfamily. As to quaternary structure, heterotetramer; the NMDAR subunits are modular and harbor tiered domains that function in concert to regulate opening and closing of the cation-selective ion channel pore. Forms heterotetrameric channels composed of two GluN1/zeta subunits (GRIN1), and two identical GluN2/epsilon subunits (GRIN2A, GRIN2B, GRIN2C or GRIN2D) or GluN3 subunits (GRIN3A or GRIN3B) (in vitro). Can also form heterotetrameric channels that contain at least two GluN1 subunits and at least two different GluN2 subunits (or a combination of one GluN2 and one GluN3 subunits) (in vitro). In vivo, the subunit composition may vary in function of the expression levels of the different subunits. Found in a complex with GRIN2A or GRIN2B, GRIN3A and PPP2CB. Found in a complex with GRIN2A or GRIN2B and GRIN3B. Interacts with SNX27 (via PDZ domain); the interaction is required for recycling to the plasma membrane when endocytosed and prevent degradation in lysosomes. Interacts with DLG4 and MPDZ. Interacts with LRFN1 and LRFN2. Interacts with MYZAP. Found in a complex with DLG4 and PRR7. Found in a complex with GRIN2B and PRR7. Interacts with PRR7; the interaction is reduced following NMDA receptor activity. In terms of processing, NMDA is probably regulated by C-terminal phosphorylation of an isoform of GRIN1 by PKC. Dephosphorylated on Ser-897 probably by protein phosphatase 2A (PPP2CB). Its phosphorylated state is influenced by the formation of the NMDAR-PPP2CB complex and the NMDAR channel activity.

Its subcellular location is the cell membrane. It localises to the postsynaptic cell membrane. The protein resides in the postsynaptic density membrane. It is found in the synaptic cell membrane. It carries out the reaction Ca(2+)(in) = Ca(2+)(out). It catalyses the reaction Na(+)(in) = Na(+)(out). The catalysed reaction is K(+)(in) = K(+)(out). Component of N-methyl-D-aspartate (NMDA) receptors (NMDARs) that function as heterotetrameric, ligand-gated cation channels with high calcium permeability and voltage-dependent block by Mg(2+). NMDARs participate in synaptic plasticity for learning and memory formation by contributing to the long-term potentiation (LTP). Channel activation requires binding of the neurotransmitter L-glutamate to the GluN2 subunit, glycine or D-serine binding to the GluN1 subunit, plus membrane depolarization to eliminate channel inhibition by Mg(2+). NMDARs mediate simultaneously the potasium efflux and the influx of calcium and sodium. Each GluN2 or GluN3 subunit confers differential attributes to channel properties, including activation, deactivation and desensitization kinetics, pH sensitivity, Ca2(+) permeability, and binding to allosteric modulators. The GluN3 subunits confer distinctive ion channel activation mechanism, which relies exclusively on glycine and does not involve glutamate. The protein is Glutamate receptor ionotropic, NMDA 1 of Canis lupus familiaris (Dog).